The sequence spans 132 residues: Spermatogenesis-associated protein 33 (132 aa).

Residues Met1–Ser60 are interaction with ATG16L1. A disordered region spans residues Met1 to Ile81. The segment covering Lys24–Gln42 has biased composition (basic and acidic residues). Positions Ser61–Glu132 are interaction with VDAC2. The PQIIIT signature appears at Pro79–Thr84. Ser87 carries the phosphoserine modification. The disordered stretch occupies residues Asp110–Glu132.

In terms of assembly, interacts (via PQIIIT motif) with PPP3R2 and PPP3CC. Interacts with VDAC2. Interacts with ATG16L1 (via WD repeats). Interacts with PPP3R1, PPP3CA and PPP3CB. As to expression, predominantly expressed in the testis (at protein level). Expressed in the sperm midpiece (at protein level).

It localises to the cytoplasm. The protein localises to the cytosol. It is found in the nucleus. Its subcellular location is the mitochondrion. In terms of biological role, plays an important role in sperm motility and male fertility. Required for sperm midpiece flexibility and for the localization of sperm calcineurin to the mitochondria. Promotes mitophagy as well as acts as an autophagy mediator in male germline cells. Links damaged mitochondria to autophagosomes via its binding to the outer mitochondrial membrane protein VDAC2, as well as to key autophagy machinery component ATG16L1. The chain is Spermatogenesis-associated protein 33 (Spata33) from Mus musculus (Mouse).